Reading from the N-terminus, the 200-residue chain is 3-isopropylmalate dehydratase small subunit (200 aa).

This sequence belongs to the LeuD family. LeuD type 1 subfamily. As to quaternary structure, heterodimer of LeuC and LeuD.

It catalyses the reaction (2R,3S)-3-isopropylmalate = (2S)-2-isopropylmalate. It participates in amino-acid biosynthesis; L-leucine biosynthesis; L-leucine from 3-methyl-2-oxobutanoate: step 2/4. In terms of biological role, catalyzes the isomerization between 2-isopropylmalate and 3-isopropylmalate, via the formation of 2-isopropylmaleate. The protein is 3-isopropylmalate dehydratase small subunit of Vibrio atlanticus (strain LGP32) (Vibrio splendidus (strain Mel32)).